Here is a 330-residue protein sequence, read N- to C-terminus: Biotin synthase 2 (330 aa).

The Radical SAM core domain maps to 48 to 278 (MCGDGFDMCS…QAAIRLAGGR (231 aa)). [4Fe-4S] cluster-binding residues include cysteine 66, cysteine 70, and cysteine 73. [2Fe-2S] cluster is bound by residues serine 111, cysteine 143, cysteine 203, and arginine 273.

The protein belongs to the radical SAM superfamily. Biotin synthase family. Homodimer. [4Fe-4S] cluster serves as cofactor. It depends on [2Fe-2S] cluster as a cofactor.

The catalysed reaction is (4R,5S)-dethiobiotin + (sulfur carrier)-SH + 2 reduced [2Fe-2S]-[ferredoxin] + 2 S-adenosyl-L-methionine = (sulfur carrier)-H + biotin + 2 5'-deoxyadenosine + 2 L-methionine + 2 oxidized [2Fe-2S]-[ferredoxin]. It participates in cofactor biosynthesis; biotin biosynthesis; biotin from 7,8-diaminononanoate: step 2/2. Catalyzes the conversion of dethiobiotin (DTB) to biotin by the insertion of a sulfur atom into dethiobiotin via a radical-based mechanism. This Corynebacterium diphtheriae (strain ATCC 700971 / NCTC 13129 / Biotype gravis) protein is Biotin synthase 2.